A 149-amino-acid polypeptide reads, in one-letter code: Protein K7 (149 aa).

The protein belongs to the orthopoxvirus OPG044 family. In terms of assembly, interacts with DDX3; this interaction inhibits DDX3 and suppresses DDX3-mediated IFN-beta promoter induction. Interacts with TRAF6 and IRAK2; these interactions suppress TLR-dependent NF-KappaB activation.

The protein localises to the host cytoplasm. In terms of biological role, virulence factor that affects the acute immune response to infection. Bcl-2-like protein which, through its interaction with the DEAD box RNA helicase DDX3X/DDX3, prevents TBK1/IKKepsilon-mediated IRF3 activation. Contributes to virulence by binding to the host TRAF6 and IRAK2 and preventing host NF-kappa-B activation. In Cynomys gunnisoni (Gunnison's prairie dog), this protein is Protein K7 (OPG044).